A 451-amino-acid polypeptide reads, in one-letter code: tRNA-2-methylthio-N(6)-dimethylallyladenosine synthase (451 aa).

An MTTase N-terminal domain is found at 3–120 (KKLFIQTHGC…LPEMVNAAGK (118 aa)). The [4Fe-4S] cluster site is built by Cys-12, Cys-49, Cys-83, Cys-156, Cys-160, and Cys-163. The Radical SAM core domain maps to 142–374 (RVEGAEAFVS…QRRISQQAYD (233 aa)). In terms of domain architecture, TRAM spans 377-441 (LSMVGEVQRI…PNSLLGELVG (65 aa)).

It belongs to the methylthiotransferase family. MiaB subfamily. As to quaternary structure, monomer. Requires [4Fe-4S] cluster as cofactor.

The protein resides in the cytoplasm. It carries out the reaction N(6)-dimethylallyladenosine(37) in tRNA + (sulfur carrier)-SH + AH2 + 2 S-adenosyl-L-methionine = 2-methylsulfanyl-N(6)-dimethylallyladenosine(37) in tRNA + (sulfur carrier)-H + 5'-deoxyadenosine + L-methionine + A + S-adenosyl-L-homocysteine + 2 H(+). In terms of biological role, catalyzes the methylthiolation of N6-(dimethylallyl)adenosine (i(6)A), leading to the formation of 2-methylthio-N6-(dimethylallyl)adenosine (ms(2)i(6)A) at position 37 in tRNAs that read codons beginning with uridine. This chain is tRNA-2-methylthio-N(6)-dimethylallyladenosine synthase, found in Marinomonas sp. (strain MWYL1).